Here is a 681-residue protein sequence, read N- to C-terminus: Heat shock 70 kDa protein (681 aa).

The span at 655-665 (NFPGGMPGAGM) shows a compositional bias: gly residues. Residues 655–681 (NFPGGMPGAGMPGNAPAGSGPTVEEVD) form a disordered region. Over residues 666-675 (PGNAPAGSGP) the composition is skewed to low complexity.

The protein belongs to the heat shock protein 70 family.

The sequence is that of Heat shock 70 kDa protein from Plasmodium falciparum.